The sequence spans 132 residues: uncharacterized protein (132 aa).

Lys-59 participates in a covalent cross-link: Glycyl lysine isopeptide (Lys-Gly) (interchain with G-Cter in SAMP2).

It belongs to the OsmC/Ohr family.

This is an uncharacterized protein from Haloferax volcanii (strain ATCC 29605 / DSM 3757 / JCM 8879 / NBRC 14742 / NCIMB 2012 / VKM B-1768 / DS2) (Halobacterium volcanii).